We begin with the raw amino-acid sequence, 299 residues long: Troponin T, cardiac muscle (299 aa).

Positions 1–71 are enriched in acidic residues; that stretch reads MSDAEEEVVE…EARDAEDGPV (71 aa). Disordered regions lie at residues 1–97 and 137–220; these read MSDA…GERV and DRIE…EKKK. S2 carries the N-acetylserine modification. S2 is modified (phosphoserine). Composition is skewed to basic and acidic residues over residues 137 to 185 and 204 to 220; these read DRIE…DEAR and QTER…EKKK. A Phosphothreonine; by PKC/PRKCA modification is found at T205. S209 bears the Phosphoserine; by PKC/PRKCA mark. T214 is modified (phosphothreonine; by PKC/PRKCA and RAF1). Phosphothreonine; by PKC/PRKCA is present on T295.

Belongs to the troponin T family. Post-translationally, phosphorylation at Thr-214 by PRKCA induces significant reduction in myofilament calcium sensitivity and actomyosin ATPase activity.

In terms of biological role, troponin T is the tropomyosin-binding subunit of troponin, the thin filament regulatory complex which confers calcium-sensitivity to striated muscle actomyosin ATPase activity. This Rattus norvegicus (Rat) protein is Troponin T, cardiac muscle (Tnnt2).